The following is an 86-amino-acid chain: Cell division topological specificity factor (86 aa).

This sequence belongs to the MinE family.

In terms of biological role, prevents the cell division inhibition by proteins MinC and MinD at internal division sites while permitting inhibition at polar sites. This ensures cell division at the proper site by restricting the formation of a division septum at the midpoint of the long axis of the cell. The chain is Cell division topological specificity factor from Shewanella loihica (strain ATCC BAA-1088 / PV-4).